Consider the following 589-residue polypeptide: Protein NRT1/ PTR FAMILY 7.2 (589 aa).

2 helical membrane passes run 32–52 (WLTAILILVNQGLATLAFFGV) and 78–98 (WTGTVYIFSLLGAFLSDSYWG). T102 carries the post-translational modification Phosphothreonine. Transmembrane regions (helical) follow at residues 105–125 (IFQASFVAGLMMLSLSTGALL), 147–167 (VLFYLSVYLIALGYGGYQPNI), 187–207 (IAFFSYFYLALNLGSLFSNTV), 217–237 (WPLGFWASAGSAFAGLVLFLI), 343–363 (IWLCTILYSVVFTQMASLFVV), 377–397 (IPASSMSSFDILSVAFFIFAY), 423–443 (MGIGLVIAIMAMISAGIVEIH), 464–484 (IFWQVPQYMLIGASEVFMYVG), 504–524 (LCMASISLGNYVSSLLVSIVM), and 548–568 (FYFLLAGLTAADFVVYLICAK).

This sequence belongs to the major facilitator superfamily. Proton-dependent oligopeptide transporter (POT/PTR) (TC 2.A.17) family. As to expression, expressed in xylem parenchyma cells within the vasculature. Expressed in siliques and flowers. Higher expression in shoots than in roots.

The protein resides in the cell membrane. Its function is as follows. Low-affinity nitrate transporter. Involved in nitrate removal from xylem sap. Not involved in oligopeptides transport. This Arabidopsis thaliana (Mouse-ear cress) protein is Protein NRT1/ PTR FAMILY 7.2 (NPF7.2).